Here is a 436-residue protein sequence, read N- to C-terminus: 3-ketoacyl-CoA thiolase (436 aa).

Cys-99 (acyl-thioester intermediate) is an active-site residue. Residues His-392 and Cys-422 each act as proton acceptor in the active site.

It belongs to the thiolase-like superfamily. Thiolase family. In terms of assembly, heterotetramer of two alpha chains (FadJ) and two beta chains (FadI).

It localises to the cytoplasm. The catalysed reaction is an acyl-CoA + acetyl-CoA = a 3-oxoacyl-CoA + CoA. It functions in the pathway lipid metabolism; fatty acid beta-oxidation. Functionally, catalyzes the final step of fatty acid oxidation in which acetyl-CoA is released and the CoA ester of a fatty acid two carbons shorter is formed. The chain is 3-ketoacyl-CoA thiolase from Shigella boydii serotype 4 (strain Sb227).